Reading from the N-terminus, the 273-residue chain is Putative phosphoenolpyruvate synthase regulatory protein (273 aa).

Residue 153–160 (AVSRAGKT) coordinates ADP.

Belongs to the pyruvate, phosphate/water dikinase regulatory protein family. PSRP subfamily.

The enzyme catalyses [pyruvate, water dikinase] + ADP = [pyruvate, water dikinase]-phosphate + AMP + H(+). The catalysed reaction is [pyruvate, water dikinase]-phosphate + phosphate + H(+) = [pyruvate, water dikinase] + diphosphate. Bifunctional serine/threonine kinase and phosphorylase involved in the regulation of the phosphoenolpyruvate synthase (PEPS) by catalyzing its phosphorylation/dephosphorylation. The sequence is that of Putative phosphoenolpyruvate synthase regulatory protein from Stenotrophomonas maltophilia (strain R551-3).